Reading from the N-terminus, the 134-residue chain is uncharacterized protein (134 aa).

Its subcellular location is the mitochondrion. This is an uncharacterized protein from Saccharomyces cerevisiae (strain ATCC 204508 / S288c) (Baker's yeast).